A 410-amino-acid polypeptide reads, in one-letter code: Subtilisin-like protease CPC735_003880 (410 aa).

The N-terminal stretch at methionine 1 to alanine 17 is a signal peptide. A propeptide spanning residues asparagine 18–alanine 118 is cleaved from the precursor. The Inhibitor I9 domain maps to arginine 31 to alanine 118. Residues glycine 127–alanine 410 enclose the Peptidase S8 domain. Aspartate 159 acts as the Charge relay system in catalysis. Asparagine 182 is a glycosylation site (N-linked (GlcNAc...) asparagine). The Charge relay system role is filled by histidine 191. Residues asparagine 238, asparagine 251, and asparagine 338 are each glycosylated (N-linked (GlcNAc...) asparagine). Serine 347 serves as the catalytic Charge relay system. N-linked (GlcNAc...) asparagine glycosylation is present at asparagine 405.

This sequence belongs to the peptidase S8 family.

It is found in the secreted. Secreted subtilisin-like serine protease with keratinolytic activity that contributes to pathogenicity. This is Subtilisin-like protease CPC735_003880 from Coccidioides posadasii (strain C735) (Valley fever fungus).